A 321-amino-acid polypeptide reads, in one-letter code: 4-hydroxy-2-oxoglutarate aldolase, mitochondrial (321 aa).

The N-terminal 23 residues, 1–23 (MLGPQIWASMRQGLSRGLSRNVK), are a transit peptide targeting the mitochondrion. Residue 71 to 72 (ST) participates in substrate binding. Lys-190 serves as the catalytic Schiff-base intermediate with substrate. 2 residues coordinate substrate: Ser-192 and Gly-216.

Belongs to the DapA family. As to quaternary structure, homotetramer.

Its subcellular location is the mitochondrion. The catalysed reaction is (4S)-4-hydroxy-2-oxoglutarate = glyoxylate + pyruvate. It catalyses the reaction (4R)-4-hydroxy-2-oxoglutarate = glyoxylate + pyruvate. Its activity is regulated as follows. Inhibited by divalent cations. In terms of biological role, catalyzes the final step in the metabolic pathway of hydroxyproline. The protein is 4-hydroxy-2-oxoglutarate aldolase, mitochondrial (Hoga1) of Mus musculus (Mouse).